Reading from the N-terminus, the 349-residue chain is Biotin synthase (349 aa).

The segment covering 1–11 (MLEGIEREAAE) has biased composition (basic and acidic residues). Residues 1–30 (MLEGIEREAAEHSNGCSGPAGHAPPAGAPR) are disordered. In terms of domain architecture, Radical SAM core spans 64–283 (HEVQLCTLLS…IAVARVMMPR (220 aa)). [4Fe-4S] cluster contacts are provided by cysteine 79, cysteine 83, and cysteine 86. Residues cysteine 123, cysteine 155, cysteine 215, and arginine 287 each coordinate [2Fe-2S] cluster.

This sequence belongs to the radical SAM superfamily. Biotin synthase family. Homodimer. It depends on [4Fe-4S] cluster as a cofactor. Requires [2Fe-2S] cluster as cofactor.

It catalyses the reaction (4R,5S)-dethiobiotin + (sulfur carrier)-SH + 2 reduced [2Fe-2S]-[ferredoxin] + 2 S-adenosyl-L-methionine = (sulfur carrier)-H + biotin + 2 5'-deoxyadenosine + 2 L-methionine + 2 oxidized [2Fe-2S]-[ferredoxin]. The protein operates within cofactor biosynthesis; biotin biosynthesis; biotin from 7,8-diaminononanoate: step 2/2. Its function is as follows. Catalyzes the conversion of dethiobiotin (DTB) to biotin by the insertion of a sulfur atom into dethiobiotin via a radical-based mechanism. This chain is Biotin synthase, found in Sorangium cellulosum (strain So ce56) (Polyangium cellulosum (strain So ce56)).